The following is a 202-amino-acid chain: Hydrogenase expression/formation protein HupD (202 aa).

3 residues coordinate Ni(2+): E28, D74, and H105.

The protein belongs to the peptidase A31 family.

Functionally, not known. Could be involved in the processing of hydrogenase. The polypeptide is Hydrogenase expression/formation protein HupD (hupD) (Rhizobium leguminosarum bv. viciae).